Here is a 130-residue protein sequence, read N- to C-terminus: Fluoride-specific ion channel FluC (130 aa).

The next 4 membrane-spanning stretches (helical) occupy residues 10 to 30 (FAVA…SLWF), 41 to 61 (GTLI…TVAM), 72 to 89 (LLFG…STYE), and 105 to 125 (LVYW…GILL). Na(+)-binding residues include Gly-80 and Thr-83.

Belongs to the fluoride channel Fluc/FEX (TC 1.A.43) family.

The protein resides in the cell inner membrane. It carries out the reaction fluoride(in) = fluoride(out). Na(+) is not transported, but it plays an essential structural role and its presence is essential for fluoride channel function. Functionally, fluoride-specific ion channel. Important for reducing fluoride concentration in the cell, thus reducing its toxicity. The polypeptide is Fluoride-specific ion channel FluC (Synechococcus sp. (strain JA-2-3B'a(2-13)) (Cyanobacteria bacterium Yellowstone B-Prime)).